A 413-amino-acid chain; its full sequence is 2,3-diketo-5-methylthiopentyl-1-phosphate enolase (413 aa).

Catalysis depends on Lys98, which acts as the Proton acceptor. Substrate contacts are provided by residues Lys147, 173–176 (KDDE), His264, Gly337, and 359–360 (GG). Mg(2+) contacts are provided by Lys173, Asp175, and Glu176. Lys173 bears the N6-carboxylysine mark.

This sequence belongs to the RuBisCO large chain family. Type IV subfamily. Homodimer. Mg(2+) is required as a cofactor.

It carries out the reaction 5-methylsulfanyl-2,3-dioxopentyl phosphate = 2-hydroxy-5-methylsulfanyl-3-oxopent-1-enyl phosphate. It functions in the pathway amino-acid biosynthesis; L-methionine biosynthesis via salvage pathway; L-methionine from S-methyl-5-thio-alpha-D-ribose 1-phosphate: step 3/6. Catalyzes the enolization of 2,3-diketo-5-methylthiopentyl-1-phosphate (DK-MTP-1-P) into 2-hydroxy-3-keto-5-methylthiopentenyl-1-phosphate (HK-MTPenyl-1-P). In Geobacillus thermodenitrificans (strain NG80-2), this protein is 2,3-diketo-5-methylthiopentyl-1-phosphate enolase.